A 411-amino-acid polypeptide reads, in one-letter code: Protein-lysine 6-oxidase (411 aa).

The first 21 residues, 1 to 21 (MRFAWTVLFLGQLQFCPLLRC), serve as a signal peptide directing secretion. The propeptide at 22–162 (APQAPREPPA…PPSHVDRMVG (141 aa)) is removed by BMP1. The interval 60-168 (PQRRRDSSAT…RMVGDDPYNP (109 aa)) is disordered. N91 and N138 each carry an N-linked (GlcNAc...) asparagine glycan. Y181 carries the sulfotyrosine modification. The lysyl-oxidase like stretch occupies residues 207–411 (PDLVPDPYYI…YASGCTISPY (205 aa)). 5 disulfide bridges follow: C232/C238, C285/C334, C318/C324, C345/C355, and C392/C406. Cu cation-binding residues include H286, H288, and H290. Positions 314-349 (KASFCLEDTSCDYGYHRRFACTAHTQGLSPGCYDTY) form a cross-link, lysine tyrosylquinone (Lys-Tyr). A 2',4',5'-topaquinone modification is found at Y349.

This sequence belongs to the lysyl oxidase family. Interacts with MFAP4. Interacts (via propeptide) with EFEMP2; this interaction is strong and facilitates formation of ternary complexes with ELN during elastic fiber assembly; this interaction limits interaction of EFEMP2 with FBLN5. Cu cation serves as cofactor. It depends on lysine tyrosylquinone residue as a cofactor. Post-translationally, the lysine tyrosylquinone cross-link (LTQ) is generated by condensation of the epsilon-amino group of a lysine with a topaquinone produced by oxidation of tyrosine. Proteolytically cleaved by BMP1 which removes the propeptide. Also proteolytically cleaved by ADAMTS2 and ADAMTS14, but not by ADAMTS3, at an additional cleavage site downstream of the BMP1 cleavage site. The propeptide plays a role in directing the deposition of this enzyme to elastic fibers, via interaction with tropoelastin. Cleavage by BMP1 to remove the propeptide does not increase enzymatic activity but increases binding to collagen. Cleavage by ADAMTS2 produces a form with reduced collagen-binding activity. In terms of processing, sulfated at Tyr-181 and also at either Tyr-177 or Tyr-178 which enhances binding to collagen. Aorta and lung.

Its subcellular location is the secreted. The protein resides in the extracellular space. The catalysed reaction is L-lysyl-[protein] + O2 + H2O = (S)-2-amino-6-oxohexanoyl-[protein] + H2O2 + NH4(+). Its function is as follows. Responsible for the post-translational oxidative deamination of peptidyl lysine residues in precursors to fibrous collagen and elastin. Regulator of Ras expression. May play a role in tumor suppression. Plays a role in the aortic wall architecture. This Rattus norvegicus (Rat) protein is Protein-lysine 6-oxidase.